A 1376-amino-acid polypeptide reads, in one-letter code: MYPNWGRYGGSSHYPPPPVPPPPPPVALPEASPGPGYSSSTAPAAPSSSGFMSFREQHLAQLQQLQQMHQKQMQCVLQPHHLPPPPLPPPPVMPGGGYGDWQPPPPPMPPPPGPALSYQKQQQYKHQMIHHQRDGPPGLVPMELESPPESPPVPPGSYMPPSQSYMPPPQPPPSYYPPSSAQPYLPPAQPSPSKPQLPPPPPSIPSGNKTTIQQEPLETGAKNKNAEQKQAAPEPDPSTMTPQEQQQYWYRQHLLSLQQRTKVHLPGHKKGLVTAKDVPEPIKEEAPVPATSQIAEPLAAEEPPLPPPNEEMPPPLPPEEPQNNSSEMSEDPEEDARLKQLQAAAAHWQQHQQHRVGFQYQGIMQRHTQLQQILQQYQQVIQHSPHIQTMSLDVQLRHYEMQQQQFQRLYQEWEREFQLWEEQLHSYPHKDQLEEYEKQWKSWQGHMRATQTYLQEKVTSFQAVKNQYMGNMAMPPPFVPYSQMPPPLPTMPPPVLPPSLPPPVMPPALPSTIPPPGMPPPVMPPSLPTSVPPPGMPPSLSSAVLPPPSLSSAGPPPVLPPPSLSGAPPVLPLPPLSSATPPPGIPPPGVPQGMPPQLTAPVPPASSSQNSQVPEKPRQALLPTPVSFGSTPPSPYHPPPQSEQGNSKPLNKVFSSEQGLGESSSALSQSVIAAKDTPVKSGGLLADPPKGSFLEGPRGPREQKEQLQKLKDFGSEPQTADHLPPPDSRLQNTSRPGMYPPPGSYRPPPPMGKPPGSIVRPSAPPARSCVPMTRPPVPIPPPPPPPPPPPPPPPVIKPKTSSVKQERWDEDSFFGLWDTNDDQGLNSEFKRDTAAIPSAPVLPPPPVHPSIPPPGPMPMGMPPMSKPPPVQHTVDYGHGRDMPTNKVEQIPYGERITLRPDPLPERSAFDADHAGQRDRYDRDRDREPYFDRQSNMTDHRDFKRDRETHRDRDRVLDYERDRFDRERRPRDDRNQSYRDKKDHSSSRRGGFDRPSYDRKSDRPPYEGPPMFGGERRTYPEERMPLPAPSLGHQPPPVPRVEKKPESKNVDDILKPPGRESRPERIVVIMRGLPGSGKTHVAKLIRDKEVEFGGPAPRVLSLDDYFIAEVEKEEKDPDSGKKVKKKVMEYEYEADMEETYRTSMFKTFKKTLDDGFFPFIILDAINDRVRHFDQFWSAAKTKGFEVYLAEMSADNQTCGKRNIHGRKLKEINKMAEHWEAAPRHMMRLDIRSLLQDAAIEEVEMEDFDANIEDQKEEKKDAEEEESELGYIPKSKWEMDTSEAKLDKLDGLRTGTKRKRDWEAIASRMEDYLQLPDDYETRASEPGKKRVRWADLEEKKDADRKRAIGFVVGQTDWEKITDESGHLAERALNRTKYI.

Disordered regions lie at residues 1–335 and 511–1058; these read MYPN…PEED and STIP…PPGR. Residues 14–27 show a composition bias toward pro residues; the sequence is YPPPPVPPPPPPVA. Composition is skewed to low complexity over residues 31–50 and 59–80; these read ASPG…SSSG and LAQL…LQPH. Composition is skewed to pro residues over residues 81–93, 102–114, 148–158, 166–176, and 184–204; these read HLPP…PPVM, QPPP…PPGP, PESPPVPPGSY, MPPPQPPPSYY, and YLPP…PPSI. Composition is skewed to polar residues over residues 207–216 and 238–260; these read GNKTTIQQEP and STMT…LQQR. The segment covering 261-271 has biased composition (basic residues); sequence TKVHLPGHKKG. Over residues 277–286 the composition is skewed to basic and acidic residues; it reads DVPEPIKEEA. Pro residues-rich tracts occupy residues 303 to 320, 511 to 537, 545 to 594, and 632 to 641; these read PPLP…PPEE, STIP…PGMP, LPPP…PQGM, and PPSPYHPPPQ. Polar residues predominate over residues 642–671; that stretch reads SEQGNSKPLNKVFSSEQGLGESSSALSQSV. An N6-methyllysine modification is found at Lys-675. Residues 698 to 714 are compositionally biased toward basic and acidic residues; it reads RGPREQKEQLQKLKDFG. Composition is skewed to pro residues over residues 738 to 753, 773 to 796, and 840 to 870; these read MYPP…PMGK, TRPP…PPVI, and PVLP…PPPV. Lys-886 participates in a covalent cross-link: Glycyl lysine isopeptide (Lys-Gly) (interchain with G-Cter in SUMO2). Basic and acidic residues-rich tracts occupy residues 896–930, 937–1004, 1013–1023, and 1039–1058; these read ITLR…EPYF, TDHR…DRPP, GERRTYPEERM, and RVEK…PPGR. Lys-943 participates in a covalent cross-link: Glycyl lysine isopeptide (Lys-Gly) (interchain with G-Cter in SUMO2). The involved in interaction with PPP1CA stretch occupies residues 1326–1333; the sequence is KKRVRWAD.

Interacts with PPP1CA and NCOA5. Forms a complex with ILF2, ILF3, KHDRBS1, RBMX, NCOA5 and PPP1CA. As to expression, high level expression seen in the brain, adipose tissue, heart and kidney, with a low level expression in muscle, spleen and lung (at protein level).

The protein resides in the nucleus. Its subcellular location is the nucleus speckle. Its function is as follows. Plays a role in the reduction of telomerase activity during differentiation of embryonic stem cells by binding to the core promoter of TERT and controlling its down-regulation. The sequence is that of YLP motif-containing protein 1 (Ylpm1) from Rattus norvegicus (Rat).